Reading from the N-terminus, the 213-residue chain is Ergothioneine transport ATP-binding protein EgtV (213 aa).

The 208-residue stretch at 5-212 folds into the ABC transporter domain; it reads VTIENVSFNY…ATKTLEIKAL (208 aa). 37 to 44 is a binding site for ATP; the sequence is GESGSGKS.

The protein belongs to the ABC transporter superfamily. As to quaternary structure, the complex is composed of two ATP-binding proteins (EgtV) and two transmembrane proteins (EgtU).

The protein localises to the cell inner membrane. It catalyses the reaction ergothioneine(out) + ATP + H2O = ergothioneine(in) + ADP + phosphate + H(+). In terms of biological role, part of the ABC transporter complex EgtUV involved in the uptake of ergothioneine (EGT), a natural low-molecular weight (LMW) thiol antioxidant which protects H.pylori against bleach stress. Responsible for energy coupling to the transport system. This is Ergothioneine transport ATP-binding protein EgtV from Helicobacter pylori (strain G27).